Consider the following 429-residue polypeptide: ATP-dependent RNA helicase RhlB (429 aa).

The short motif at 9-37 (EKFAQMGLEPEVLAGLESKGFHYCTPIQA) is the Q motif element. The Helicase ATP-binding domain occupies 40-219 (LPLLVEGHDL…YEHMNHPEHV (180 aa)). ATP is bound at residue 53 to 60 (AQTGTGKT). Residues 165-168 (DEAD) carry the DEAD box motif. A Helicase C-terminal domain is found at 243 to 390 (KMLLLLSLME…VSKYDREALL (148 aa)). A disordered region spans residues 395-429 (APKRVVRNRQPVNRNMRDRQGGGNSNNRRRPPRKS).

Belongs to the DEAD box helicase family. RhlB subfamily. In terms of assembly, component of the RNA degradosome, which is a multiprotein complex involved in RNA processing and mRNA degradation.

The protein localises to the cytoplasm. It carries out the reaction ATP + H2O = ADP + phosphate + H(+). DEAD-box RNA helicase involved in RNA degradation. Has RNA-dependent ATPase activity and unwinds double-stranded RNA. This Aeromonas salmonicida (strain A449) protein is ATP-dependent RNA helicase RhlB.